The following is a 142-amino-acid chain: Hemoglobin subunit alpha (142 aa).

The region spanning 2-142 (VLSPTDKSNV…VSTVLTSKYR (141 aa)) is the Globin domain. Residue Ser-4 is modified to Phosphoserine. Lys-8 and Lys-12 each carry N6-succinyllysine. At Lys-17 the chain carries N6-acetyllysine; alternate. Lys-17 bears the N6-succinyllysine; alternate mark. Tyr-25 bears the Phosphotyrosine mark. Position 41 is an N6-succinyllysine (Lys-41). O2 is bound at residue His-59. His-88 is a heme b binding site. The residue at position 103 (Ser-103) is a Phosphoserine. Thr-109 carries the phosphothreonine modification. Residues Ser-125 and Ser-132 each carry the phosphoserine modification. 2 positions are modified to phosphothreonine: Thr-135 and Thr-138. The residue at position 139 (Ser-139) is a Phosphoserine.

Belongs to the globin family. Heterotetramer of two alpha chains and two beta chains. As to expression, red blood cells.

Involved in oxygen transport from the lung to the various peripheral tissues. Functionally, hemopressin acts as an antagonist peptide of the cannabinoid receptor CNR1. Hemopressin-binding efficiently blocks cannabinoid receptor CNR1 and subsequent signaling. The sequence is that of Hemoglobin subunit alpha (HBA) from Balaenoptera acutorostrata (Common minke whale).